Consider the following 418-residue polypeptide: UDP-N-acetylglucosamine 1-carboxyvinyltransferase (418 aa).

Residue 22–23 (KN) coordinates phosphoenolpyruvate. Arg-92 lines the UDP-N-acetyl-alpha-D-glucosamine pocket. Cys-116 serves as the catalytic Proton donor. Position 116 is a 2-(S-cysteinyl)pyruvic acid O-phosphothioketal (Cys-116). Residues 121–125 (RPIDL), Asp-305, and Leu-327 contribute to the UDP-N-acetyl-alpha-D-glucosamine site.

This sequence belongs to the EPSP synthase family. MurA subfamily.

Its subcellular location is the cytoplasm. It carries out the reaction phosphoenolpyruvate + UDP-N-acetyl-alpha-D-glucosamine = UDP-N-acetyl-3-O-(1-carboxyvinyl)-alpha-D-glucosamine + phosphate. Its pathway is cell wall biogenesis; peptidoglycan biosynthesis. Cell wall formation. Adds enolpyruvyl to UDP-N-acetylglucosamine. This Campylobacter jejuni subsp. doylei (strain ATCC BAA-1458 / RM4099 / 269.97) protein is UDP-N-acetylglucosamine 1-carboxyvinyltransferase.